A 182-amino-acid chain; its full sequence is Large ribosomal subunit protein uL16 (182 aa).

It belongs to the universal ribosomal protein uL16 family. As to quaternary structure, part of the 50S ribosomal subunit.

The sequence is that of Large ribosomal subunit protein uL16 from Thermococcus kodakarensis (strain ATCC BAA-918 / JCM 12380 / KOD1) (Pyrococcus kodakaraensis (strain KOD1)).